We begin with the raw amino-acid sequence, 309 residues long: Malate dehydrogenase (309 aa).

NAD(+)-binding positions include 10–15 (GAGNVG) and Asp34. Substrate-binding residues include Arg83 and Arg89. NAD(+)-binding positions include Asn96 and 119-121 (VSN). Asn121 and Arg152 together coordinate substrate. His176 functions as the Proton acceptor in the catalytic mechanism.

Belongs to the LDH/MDH superfamily. MDH type 3 family.

It carries out the reaction (S)-malate + NAD(+) = oxaloacetate + NADH + H(+). Its function is as follows. Catalyzes the reversible oxidation of malate to oxaloacetate. The polypeptide is Malate dehydrogenase (Heliobacterium modesticaldum (strain ATCC 51547 / Ice1)).